A 176-amino-acid chain; its full sequence is dCTP deaminase (176 aa).

Residues 99–104 (RSTLAR) and aspartate 115 contribute to the dCTP site. The active-site Proton donor/acceptor is glutamate 125. Glutamine 163 is a dCTP binding site.

It belongs to the dCTP deaminase family. As to quaternary structure, homotrimer.

It carries out the reaction dCTP + H2O + H(+) = dUTP + NH4(+). The protein operates within pyrimidine metabolism; dUMP biosynthesis; dUMP from dCTP (dUTP route): step 1/2. In terms of biological role, catalyzes the deamination of dCTP to dUTP. This is dCTP deaminase from Pyrobaculum islandicum (strain DSM 4184 / JCM 9189 / GEO3).